A 120-amino-acid chain; its full sequence is Ribonuclease P protein component (120 aa).

The protein belongs to the RnpA family. As to quaternary structure, consists of a catalytic RNA component (M1 or rnpB) and a protein subunit.

The catalysed reaction is Endonucleolytic cleavage of RNA, removing 5'-extranucleotides from tRNA precursor.. Functionally, RNaseP catalyzes the removal of the 5'-leader sequence from pre-tRNA to produce the mature 5'-terminus. It can also cleave other RNA substrates such as 4.5S RNA. The protein component plays an auxiliary but essential role in vivo by binding to the 5'-leader sequence and broadening the substrate specificity of the ribozyme. This Chlamydia trachomatis serovar D (strain ATCC VR-885 / DSM 19411 / UW-3/Cx) protein is Ribonuclease P protein component.